The primary structure comprises 1234 residues: MVHPVQVGKRTRMSFAKVKDVAEMPNLIEIQLDSYKWFLDAGLYEVFDDINPISNFTGNLVLEFVGYTLDMDNIKYSVEECKERDTTYAAPLKVAVRLQNKETGEIKEQEVFMGDFPLMTEQGTFIINGAERVIVSQLVRSPGVYYNYNVDKTGKKLFSATVIPNRGAWLEYETDSNDVIYVRIDKTRKLPISILGRAMGFGSDQELLEYFGEEERFKATIEKDNTKTKEEALLEIYKRLRPGEPPTVDSAISLIDSLFFDAKRYDLSRVGRYKFNKKLAIGLRIANQIAAEDIVDKLTGEVLVAKGEKISRANAEEIQNRGINSVDVLVEDRVIRIIGNHFVDIHKCVDFDISDLNIRELVHYPTLREILDNYSDEETIKEEIKKNMTRLIPKHIIKDDIFATISYQIGLAYNIGYVDDIDHLGNRRLRSVGELLQNQFRIGLSRMERVVKERMTIQDQEAITPQQLINIRPVAAAIKEFFGSSQLSQFMDQTNPLSELTHKRRLSALGPGGLSRERAGFEVRDVHHSHYGRMCPIETPEGPNIGLINSLATYAKVNEYGFIETPYRVVDKAEGRVTGEIRYFTADEEDQYLVAQANEPLDENGCFIDKKVTVRDKGEVLVVPSKDVDLMDVSPRQLVSVATAMIPFLENDDASRALMGSNMQRQAVPLLKPYAPIVGTGIEYKAAVDSGVLPKAKNAGEVVYVSANEVRVKRELDGGVDTYRLLKFKRSNQGTCINQRPIVAKGDWVLKGEVLADGPSTDLGEIALGKNIRMGFITWEGYNYEDAMLISEELVREDVFTSIHIEEYECEARDTKLGPEEITRDIPNVSEDALKDIDERGIIRIGAEVRSGDILVGKVTPKGETELTAEERLLRAIFGEKAREVRDTSLRVPHGEAGIIVDVKVFTRENGDDLSPGVNELVRCYIAQKRKISVGDKMAGRHGNKGVISRVLPEEDMPFLPDGRPLQICLNPLGVPSRMNIGQVLEVHLGWAASALGWHIATPVFDGATETDIEDCLEKAGYNRNGKTVLRDGRTGEEFDNEVTVGIMYILKLAHLVDDKIHARSTGPYSLVTQQPLGGKAQFGGQRFGEMEVWALEAYGAAHTLQEILTVKSDDVVGRVKTYEAIVKGENIPEPGVPESFKVLIKELQALCLDVKVLNDNNQEVKFKELAEDDDEIEVLEVNMEGTEDSTTEEAKEEKGEAYIPAEEIDEEIDYENIDLLDFTSDLDIEDDFN.

The protein belongs to the RNA polymerase beta chain family. In terms of assembly, the RNAP catalytic core consists of 2 alpha, 1 beta, 1 beta' and 1 omega subunit. When a sigma factor is associated with the core the holoenzyme is formed, which can initiate transcription.

The catalysed reaction is RNA(n) + a ribonucleoside 5'-triphosphate = RNA(n+1) + diphosphate. Its function is as follows. DNA-dependent RNA polymerase catalyzes the transcription of DNA into RNA using the four ribonucleoside triphosphates as substrates. This chain is DNA-directed RNA polymerase subunit beta, found in Clostridium perfringens (strain ATCC 13124 / DSM 756 / JCM 1290 / NCIMB 6125 / NCTC 8237 / Type A).